The chain runs to 1863 residues: Breast cancer type 1 susceptibility protein homolog (1863 aa).

An N-acetylmethionine modification is found at methionine 1. The segment at 24 to 65 (CPICLELIKEPVSTKCDHIFCKFCMLKLLNQKKGPSQCPLCK) adopts an RING-type zinc-finger fold. Lysine 109 is covalently cross-linked (Glycyl lysine isopeptide (Lys-Gly) (interchain with G-Cter in SUMO2)). A Phosphoserine modification is found at serine 114. A disordered region spans residues 230 to 267 (ETDVTNTEHHQPSNNDLNTTEKRATERHPEKYQGSSVS). A compositionally biased stretch (basic and acidic residues) spans 248-260 (TTEKRATERHPEK). Residue lysine 301 forms a Glycyl lysine isopeptide (Lys-Gly) (interchain with G-Cter in SUMO2) linkage. The disordered stretch occupies residues 306-338 (NKSKQPGLARSQHNRWAGSKETCNDRRTPSTEK). Basic and acidic residues predominate over residues 327 to 338 (TCNDRRTPSTEK). Lysine 339 is covalently cross-linked (Glycyl lysine isopeptide (Lys-Gly) (interchain with G-Cter in SUMO2)). Residues serine 395, serine 398, serine 423, and serine 434 each carry the phosphoserine modification. Glycyl lysine isopeptide (Lys-Gly) (interchain with G-Cter in SUMO2) cross-links involve residues lysine 443, lysine 459, and lysine 519. Serine 551 is modified (phosphoserine). Glycyl lysine isopeptide (Lys-Gly) (interchain with G-Cter in SUMO2) cross-links involve residues lysine 583 and lysine 654. The tract at residues 650-739 (IKKKKYNQMP…EKEEKLETVK (90 aa)) is disordered. A phosphoserine mark is found at serine 694, serine 708, and serine 725. Positions 705–716 (APGSFTNCSNTS) are enriched in polar residues. Positions 727–737 (PREEKEEKLET) are enriched in basic and acidic residues. Glycyl lysine isopeptide (Lys-Gly) (interchain with G-Cter in SUMO2) cross-links involve residues lysine 734 and lysine 739. Serine 753 and serine 840 each carry phosphoserine. The tract at residues 896–915 (SPKVTFEREQKEQNQGKNES) is disordered. Over residues 900–909 (TFEREQKEQN) the composition is skewed to basic and acidic residues. Residues lysine 918 and lysine 987 each participate in a glycyl lysine isopeptide (Lys-Gly) (interchain with G-Cter in SUMO2) cross-link. Serine 988 is subject to Phosphoserine; by CHEK2. Serine 1009 carries the phosphoserine modification. A Glycyl lysine isopeptide (Lys-Gly) (interchain with G-Cter in SUMO2) cross-link involves residue lysine 1079. Serine 1143, serine 1189, serine 1191, serine 1211, serine 1217, serine 1218, serine 1280, serine 1328, serine 1336, serine 1342, and serine 1387 each carry phosphoserine. The tract at residues 1181–1216 (VQRGELSRSPSPFTHTHLAQGYRRGAKKLESSEENL) is disordered. Residues 1322-1395 (KQMRHQSESQ…SSQSDILTTQ (74 aa)) form a disordered region. Polar residues predominate over residues 1373-1395 (ESETSVSEDCSGLSSQSDILTTQ). Threonine 1394 bears the Phosphothreonine mark. The interaction with PALB2 stretch occupies residues 1397–1424 (RDTMQDNLIKLQQEMAELEAVLEQHGSQ). A phosphoserine mark is found at serine 1423, serine 1457, serine 1524, and serine 1542. The tract at residues 1440–1505 (EDLQNPEQST…SSPSKCPSLD (66 aa)) is disordered. Residues 1444–1470 (NPEQSTSEKAVLTSQKSSEYPISQNPE) show a composition bias toward polar residues. Positions 1565-1642 (ESGISLFSDD…SREKPELTAS (78 aa)) are disordered. The segment covering 1610–1624 (SAQSPAAAHTTNTAG) has biased composition (polar residues). 2 consecutive BRCT domains span residues 1642-1736 (STER…DFEV) and 1756-1855 (QDRK…TYLI).

Heterodimer with BARD1. Part of the BRCA1-associated genome surveillance complex (BASC), which contains BRCA1, MSH2, MSH6, MLH1, ATM, BLM, PMS2 and the MRE11-RAD50-NBN protein (MRN) complex. This association could be a dynamic process changing throughout the cell cycle and within subnuclear domains. Component of the BRCA1-A complex, at least composed of BRCA1, BARD1, UIMC1/RAP80, ABRAXAS1, BRCC3/BRCC36, BABAM2 and BABAM1/NBA1. Interacts (via the BRCT domains) with ABRAXAS1 (phosphorylated form); this is important for recruitment to sites of DNA damage. Can form a heterotetramer with two molecules of ABRAXAS1 (phosphorylated form). Component of the BRCA1-RBBP8 complex. Interacts (via the BRCT domains) with RBBP8 ('Ser-327' phosphorylated form); the interaction ubiquitinates RBBP8, regulates CHEK1 activation, and involves RBBP8 in BRCA1-dependent G2/M checkpoint control on DNA damage. Associates with RNA polymerase II holoenzyme. Interacts with SMC1A, NELFB, DCLRE1C, CLSPN. CHEK1, CHEK2, BAP1, BRCC3, UBXN1 and PCLAF. Interacts (via BRCT domains) with BRIP1 (phosphorylated form). Interacts with FANCD2 (ubiquitinated form). Interacts with H2AX (phosphorylated on 'Ser-140'). Interacts (via the BRCT domains) with ACACA (phosphorylated form); the interaction prevents dephosphorylation of ACACA. Part of a BRCA complex containing BRCA1, BRCA2 and PALB2. Interacts directly with PALB2; the interaction is essential for its function in HRR. Interacts directly with BRCA2; the interaction occurs only in the presence of PALB2 which serves as the bridging protein. Interacts (via the BRCT domains) with LMO4; the interaction represses the transcriptional activity of BRCA1. Interacts (via the BRCT domains) with CCAR2 (via N-terminus); the interaction represses the transcriptional activator activity of BRCA1. Interacts with EXD2. Interacts (via C-terminus) with DHX9; this interaction is direct and links BRCA1 to the RNA polymerase II holoenzyme. Interacts with DNA helicase ZGRF1; the interaction is increased following DNA damage induction. Post-translationally, phosphorylated in response to IR, UV, and various stimuli that cause checkpoint activation, probably by ATM or ATR. Phosphorylation at Ser-988 by CHEK2 regulates mitotic spindle assembly. Phosphorylation by AURKA regulates centrosomal microtubule nucleation. Autoubiquitinated, undergoes 'Lys-6'-linked polyubiquitination. 'Lys-6'-linked polyubiquitination does not promote degradation.

The protein localises to the nucleus. The protein resides in the chromosome. It is found in the cytoplasm. It catalyses the reaction S-ubiquitinyl-[E2 ubiquitin-conjugating enzyme]-L-cysteine + [acceptor protein]-L-lysine = [E2 ubiquitin-conjugating enzyme]-L-cysteine + N(6)-ubiquitinyl-[acceptor protein]-L-lysine.. In terms of biological role, E3 ubiquitin-protein ligase that specifically mediates the formation of 'Lys-6'-linked polyubiquitin chains and plays a central role in DNA repair by facilitating cellular responses to DNA damage. It is unclear whether it also mediates the formation of other types of polyubiquitin chains. The BRCA1-BARD1 heterodimer coordinates a diverse range of cellular pathways such as DNA damage repair, ubiquitination and transcriptional regulation to maintain genomic stability. Regulates centrosomal microtubule nucleation. Required for appropriate cell cycle arrests after ionizing irradiation in both the S-phase and the G2 phase of the cell cycle. Required for FANCD2 targeting to sites of DNA damage. Inhibits lipid synthesis by binding to inactive phosphorylated ACACA and preventing its dephosphorylation. Contributes to homologous recombination repair (HRR) via its direct interaction with PALB2, fine-tunes recombinational repair partly through its modulatory role in the PALB2-dependent loading of BRCA2-RAD51 repair machinery at DNA breaks. Component of the BRCA1-RBBP8 complex which regulates CHEK1 activation and controls cell cycle G2/M checkpoints on DNA damage via BRCA1-mediated ubiquitination of RBBP8. Acts as a transcriptional activator. The protein is Breast cancer type 1 susceptibility protein homolog (BRCA1) of Pan troglodytes (Chimpanzee).